Reading from the N-terminus, the 84-residue chain is Small ribosomal subunit protein uS17 (84 aa).

The protein belongs to the universal ribosomal protein uS17 family. In terms of assembly, part of the 30S ribosomal subunit.

One of the primary rRNA binding proteins, it binds specifically to the 5'-end of 16S ribosomal RNA. This Ureaplasma parvum serovar 3 (strain ATCC 27815 / 27 / NCTC 11736) protein is Small ribosomal subunit protein uS17.